The primary structure comprises 100 residues: NADH-quinone oxidoreductase subunit K (100 aa).

3 helical membrane passes run 4 to 24, 28 to 48, and 60 to 80; these read YEYY…GVIV, IIAM…AFVA, and VFVF…LGLI.

Belongs to the complex I subunit 4L family. In terms of assembly, NDH-1 is composed of 14 different subunits. Subunits NuoA, H, J, K, L, M, N constitute the membrane sector of the complex.

It localises to the cell inner membrane. It catalyses the reaction a quinone + NADH + 5 H(+)(in) = a quinol + NAD(+) + 4 H(+)(out). Functionally, NDH-1 shuttles electrons from NADH, via FMN and iron-sulfur (Fe-S) centers, to quinones in the respiratory chain. The immediate electron acceptor for the enzyme in this species is believed to be ubiquinone. Couples the redox reaction to proton translocation (for every two electrons transferred, four hydrogen ions are translocated across the cytoplasmic membrane), and thus conserves the redox energy in a proton gradient. This is NADH-quinone oxidoreductase subunit K from Sulfurihydrogenibium azorense (strain DSM 15241 / OCM 825 / Az-Fu1).